Here is a 352-residue protein sequence, read N- to C-terminus: Pyrimidine monooxygenase RutA (352 aa).

FMN is bound by residues 49 to 50 (IK), asparagine 115, glutamate 124, 140 to 141 (RY), and serine 189.

Belongs to the NtaA/SnaA/DszA monooxygenase family. RutA subfamily.

It catalyses the reaction uracil + FMNH2 + NADH + O2 = (Z)-3-ureidoacrylate + FMN + NAD(+) + H2O + H(+). The catalysed reaction is thymine + FMNH2 + NADH + O2 = (Z)-2-methylureidoacrylate + FMN + NAD(+) + H2O + H(+). Its function is as follows. Catalyzes the pyrimidine ring opening between N-3 and C-4 by an unusual flavin hydroperoxide-catalyzed mechanism, adding oxygen atoms in the process to yield ureidoacrylate peracid, that immediately reacts with FMN forming ureidoacrylate and FMN-N(5)-oxide. The FMN-N(5)-oxide reacts spontaneously with NADH to produce FMN. Requires the flavin reductase RutF to regenerate FMN in vivo. This is Pyrimidine monooxygenase RutA from Caulobacter segnis (strain ATCC 21756 / DSM 7131 / JCM 7823 / NBRC 15250 / LMG 17158 / TK0059) (Mycoplana segnis).